Consider the following 249-residue polypeptide: Triosephosphate isomerase (249 aa).

8-10 contacts substrate; sequence NWK. His-95 acts as the Electrophile in catalysis. Residue Glu-163 is the Proton acceptor of the active site. Substrate contacts are provided by Gly-169 and Ser-209.

This sequence belongs to the triosephosphate isomerase family. Homodimer.

The protein localises to the cytoplasm. The catalysed reaction is D-glyceraldehyde 3-phosphate = dihydroxyacetone phosphate. It participates in carbohydrate biosynthesis; gluconeogenesis. Its pathway is carbohydrate degradation; glycolysis; D-glyceraldehyde 3-phosphate from glycerone phosphate: step 1/1. Involved in the gluconeogenesis. Catalyzes stereospecifically the conversion of dihydroxyacetone phosphate (DHAP) to D-glyceraldehyde-3-phosphate (G3P). This Orientia tsutsugamushi (strain Ikeda) (Rickettsia tsutsugamushi) protein is Triosephosphate isomerase.